Reading from the N-terminus, the 206-residue chain is Protein GrpE (206 aa).

Over residues 1–15 (MTDSNGQKDNNQDQA) the composition is skewed to polar residues. The tract at residues 1–38 (MTDSNGQKDNNQDQAQPADPVVSKPYIMPDDPEEGTNE) is disordered.

Belongs to the GrpE family. Homodimer.

The protein localises to the cytoplasm. In terms of biological role, participates actively in the response to hyperosmotic and heat shock by preventing the aggregation of stress-denatured proteins, in association with DnaK and GrpE. It is the nucleotide exchange factor for DnaK and may function as a thermosensor. Unfolded proteins bind initially to DnaJ; upon interaction with the DnaJ-bound protein, DnaK hydrolyzes its bound ATP, resulting in the formation of a stable complex. GrpE releases ADP from DnaK; ATP binding to DnaK triggers the release of the substrate protein, thus completing the reaction cycle. Several rounds of ATP-dependent interactions between DnaJ, DnaK and GrpE are required for fully efficient folding. The protein is Protein GrpE of Rhodopseudomonas palustris (strain BisB5).